The sequence spans 222 residues: 7-cyano-7-deazaguanine synthase (222 aa).

7–17 (LSGGMDSAVAT) provides a ligand contact to ATP. C188, C196, C199, and C202 together coordinate Zn(2+).

Belongs to the QueC family. It depends on Zn(2+) as a cofactor.

The catalysed reaction is 7-carboxy-7-deazaguanine + NH4(+) + ATP = 7-cyano-7-deazaguanine + ADP + phosphate + H2O + H(+). Its pathway is purine metabolism; 7-cyano-7-deazaguanine biosynthesis. In terms of biological role, catalyzes the ATP-dependent conversion of 7-carboxy-7-deazaguanine (CDG) to 7-cyano-7-deazaguanine (preQ(0)). The protein is 7-cyano-7-deazaguanine synthase of Methanothermobacter thermautotrophicus (strain ATCC 29096 / DSM 1053 / JCM 10044 / NBRC 100330 / Delta H) (Methanobacterium thermoautotrophicum).